The sequence spans 861 residues: MKLGWIEVAALAAASVVSAKDDLAYSPPFYPSPWADGQGEWAEVYKRAVDIVSQMTLTEKVNLTTGTGWQLERCVGQTGSVPRLNIPSLCLQDSPLGIRFSDYNSAFPAGVNVAATWDKTLAYLRGQAMGEEFSDKGIDVQLGPAAGPLGAHPDGGRNWEGFSPDPALTGVLFAETIRGIQDAGVIATAKHYIMNEQEHFRQQPEAAGYGFNVSDSLSSNVDDKTMHELYLWPFADAVRAGVGAVMCSYNQINNSYGCENSETLNKLLKAELGFQGFVMSDWTAHHSGVGAALAGLDMSMPGDVTFDSGTSFWGANLTVGVLNGTIPQWRVDDMAVRIMAAYYKVGRDTKYTPPNFSSWTRDEYGFAHNHVSEGAYERVNEFVDVQRDHADLIRRIGAQSTVLLKNKGALPLSRKEKLVALLGEDAGSNSWGANGCDDRGCDNGTLAMAWGSGTANFPYLVTPEQAIQNEVLQGRGNVFAVTDSWALDKIAAAARQASVSLVFVNSDSGEGYLSVDGNEGDRNNITLWKNGDNVVKTAAENCNNTVVIIHSVGPVLIDEWYDHPNVTGILWAGLPGQESGNSIADVLYGRVNPGAKSPFTWGKTRESYGSPLVKDANNGNGAPQSDFTQGVFIDYRHFDKFNETPIYEFGYGLSYTTFELSDLHVQPLNASRYTPTSGMTEAAKNFGEIGDASEYVYPEGLERIHEFIYPWINSTDLKASSDDSNYGWEDSKYIPEGATDGSAQPLLPASGGAGGNPGLYEDLFRVSVKVKNTGNVAGDEVPQLYVSLGGPNEPKVVLRKFERIHLAPSQEAVWTTTLTRRDLANWDVSAQDWTVTPYPKTIYVGNSSRKLPLQASLPKAQ.

The signal sequence occupies residues 1-19 (MKLGWIEVAALAAASVVSA). 3 N-linked (GlcNAc...) asparagine glycosylation sites follow: Asn62, Asn212, and Asn253. Residue Asp281 is part of the active site. N-linked (GlcNAc...) asparagine glycans are attached at residues Asn316, Asn323, Asn355, Asn443, Asn524, Asn543, Asn565, Asn669, Asn713, and Asn846.

The protein belongs to the glycosyl hydrolase 3 family.

The protein localises to the secreted. It catalyses the reaction Hydrolysis of terminal, non-reducing beta-D-glucosyl residues with release of beta-D-glucose.. It participates in glycan metabolism; cellulose degradation. Its function is as follows. Beta-glucosidases are one of a number of cellulolytic enzymes involved in the degradation of cellulosic biomass. Catalyzes the last step releasing glucose from the inhibitory cellobiose. The polypeptide is Probable beta-glucosidase A (bglA) (Aspergillus flavus (strain ATCC 200026 / FGSC A1120 / IAM 13836 / NRRL 3357 / JCM 12722 / SRRC 167)).